Consider the following 95-residue polypeptide: Histone-like DNA-binding protein (95 aa).

It belongs to the bacterial histone-like protein family.

In Rickettsia typhi (strain ATCC VR-144 / Wilmington), this protein is Histone-like DNA-binding protein.